The chain runs to 540 residues: Probable feruloyl esterase B-1 (540 aa).

The signal sequence occupies residues 1–18; the sequence is MLVMQLLLPFLASTAAAA. 6 N-linked (GlcNAc...) asparagine glycosylation sites follow: asparagine 28, asparagine 49, asparagine 66, asparagine 95, asparagine 113, and asparagine 195. Cystine bridges form between cysteine 41/cysteine 90 and cysteine 76/cysteine 129. Intrachain disulfides connect cysteine 202–cysteine 458, cysteine 271–cysteine 288, and cysteine 297–cysteine 308. Catalysis depends on serine 203, which acts as the Acyl-ester intermediate. The N-linked (GlcNAc...) asparagine glycan is linked to asparagine 234. Aspartate 272, aspartate 275, alanine 277, aspartate 279, and isoleucine 281 together coordinate Ca(2+). 3 N-linked (GlcNAc...) asparagine glycosylation sites follow: asparagine 298, asparagine 328, and asparagine 367. Active-site charge relay system residues include aspartate 417 and histidine 457. Asparagine 506 carries N-linked (GlcNAc...) asparagine glycosylation. A disulfide bridge links cysteine 517 with cysteine 539.

It belongs to the tannase family. In terms of assembly, homodimer.

The protein localises to the secreted. It carries out the reaction feruloyl-polysaccharide + H2O = ferulate + polysaccharide.. In terms of biological role, involved in degradation of plant cell walls. Hydrolyzes the feruloyl-arabinose ester bond in arabinoxylans as well as the feruloyl-galactose and feruloyl-arabinose ester bonds in pectin. The sequence is that of Probable feruloyl esterase B-1 (faeB-1) from Aspergillus oryzae (strain ATCC 42149 / RIB 40) (Yellow koji mold).